The chain runs to 381 residues: Lipopolysaccharide 1,2-N-acetylglucosaminetransferase (381 aa).

The protein belongs to the glycosyltransferase group 1 family. Glycosyltransferase 4 subfamily.

It localises to the cell inner membrane. It carries out the reaction UDP-N-acetyl-alpha-D-glucosamine + [lipopolysaccharide] = UDP + N-acetyl-alpha-D-glucosaminyl-[lipopolysaccharide].. It participates in bacterial outer membrane biogenesis; LPS core biosynthesis. Functionally, transferase involved in the biosynthesis of the core oligosaccharide region of lipopolysaccharide (LPS). Catalyzes the addition of the terminal N-acetyl-D-glucosamine (GlcNAc) group to the outer-core glucose II, the last step of the lipid A-core oligosaccharide biosynthesis. The protein is Lipopolysaccharide 1,2-N-acetylglucosaminetransferase of Salmonella typhimurium (strain LT2 / SGSC1412 / ATCC 700720).